Consider the following 323-residue polypeptide: tRNA-dihydrouridine(16) synthase (323 aa).

FMN is bound by residues 7–9 (PME) and Gln68. Catalysis depends on Cys98, which acts as the Proton donor. FMN contacts are provided by residues Lys139, 199-201 (NGE), and 223-224 (GR).

The protein belongs to the Dus family. DusC subfamily. FMN serves as cofactor.

The catalysed reaction is 5,6-dihydrouridine(16) in tRNA + NADP(+) = uridine(16) in tRNA + NADPH + H(+). It carries out the reaction 5,6-dihydrouridine(16) in tRNA + NAD(+) = uridine(16) in tRNA + NADH + H(+). In terms of biological role, catalyzes the synthesis of 5,6-dihydrouridine (D), a modified base found in the D-loop of most tRNAs, via the reduction of the C5-C6 double bond in target uridines. Specifically modifies U16 in tRNAs. The sequence is that of tRNA-dihydrouridine(16) synthase from Pseudomonas putida (strain ATCC 47054 / DSM 6125 / CFBP 8728 / NCIMB 11950 / KT2440).